The primary structure comprises 319 residues: Malate dehydrogenase (319 aa).

NAD(+)-binding positions include 10 to 15 (GSGNIG) and Asp-34. Arg-83 and Arg-89 together coordinate substrate. NAD(+) is bound by residues Asn-96 and 119–121 (ITN). The substrate site is built by Asn-121 and Arg-152. Residue His-176 is the Proton acceptor of the active site.

It belongs to the LDH/MDH superfamily. MDH type 3 family.

It catalyses the reaction (S)-malate + NAD(+) = oxaloacetate + NADH + H(+). Catalyzes the reversible oxidation of malate to oxaloacetate. This Paramagnetospirillum magneticum (strain ATCC 700264 / AMB-1) (Magnetospirillum magneticum) protein is Malate dehydrogenase.